The chain runs to 125 residues: Calcitonin receptor-stimulating peptide 2 (125 aa).

The first 25 residues, 1-25, serve as a signal peptide directing secretion; the sequence is MGFWKFLPFLVLSFLVVYQAGMFQA. A propeptide spanning residues 26-77 is cleaved from the precursor; that stretch reads APFRSALENDFDPAILTEKEMCLLLAAVMNDYVQMKTSELKQEAEHFHITAQ. Residues Cys-81 and Cys-86 are joined by a disulfide bond.

It belongs to the calcitonin family.

It localises to the secreted. In Capra hircus (Goat), this protein is Calcitonin receptor-stimulating peptide 2 (CRSP2).